A 488-amino-acid polypeptide reads, in one-letter code: Facilitated trehalose transporter Tret1-2 homolog (488 aa).

The Cytoplasmic portion of the chain corresponds to 1-28; it reads MKILMRADTHVSYSVPAEGPKANFTFSQ. Residues 29–49 form a helical membrane-spanning segment; sequence VLAALSVSLCSLVVGFVSAYT. At 50 to 72 the chain is on the extracellular side; the sequence is SPALVSMTDRTITSFEVTKDAGS. A helical transmembrane segment spans residues 73–93; sequence WVGGIMPLAALAGGITGGPLI. At 94 to 105 the chain is on the cytoplasmic side; sequence EYLGRRTTILAT. The chain crosses the membrane as a helical span at residues 106-126; that stretch reads AVPFIVSSLLIACAVNVIMIL. At 127–129 the chain is on the extracellular side; the sequence is CGR. The helical transmembrane segment at 130–150 threads the bilayer; the sequence is FLTGFCVGIASLSLPVYLGET. The Cytoplasmic portion of the chain corresponds to 151–160; it reads LQPEVRGTLG. The helical transmembrane segment at 161–181 threads the bilayer; it reads LLPTALGNIGILVCYVAGSFM. N-linked (GlcNAc...) asparagine glycosylation occurs at Asn182. Residues 182–184 are Extracellular-facing; it reads NWS. A helical transmembrane segment spans residues 185–205; the sequence is MLAFLGAALPVPFLILMIIIP. Topologically, residues 206–268 are cytoplasmic; that stretch reads ETPRWFVNRG…ELFKRINLKP (63 aa). The chain crosses the membrane as a helical span at residues 269–289; sequence LSISLGLMFFQQFSGINAVIF. Residues 290 to 305 are Extracellular-facing; sequence YTVQIFKDAGSTIDSN. A helical membrane pass occupies residues 306-326; sequence LCTIIVGIVNFFATFMGILLI. At 327–332 the chain is on the cytoplasmic side; the sequence is DRLGRK. The chain crosses the membrane as a helical span at residues 333 to 353; that stretch reads ILLYISDIAMILTLSILGGFF. Over 354 to 372 the chain is Extracellular; it reads YCKAHGPDVSHLGWLPLTC. The helical transmembrane segment at 373-393 threads the bilayer; sequence FVIYILGFSLGFGPIPWLMMG. At 394-402 the chain is on the cytoplasmic side; that stretch reads EILPAKIRG. A helical membrane pass occupies residues 403–423; it reads PAASVVTAFNWFCTFVVTKTF. Residues 424–433 are Extracellular-facing; it reads QDLTVAMGAH. The helical transmembrane segment at 434–454 threads the bilayer; sequence GAFWLFGVVCIVGLFFVIICV. Over 455 to 488 the chain is Cytoplasmic; that stretch reads PETRGKSLEEIERKMMGRVPISAVVNIKPFSFNM.

The protein belongs to the major facilitator superfamily. Sugar transporter (TC 2.A.1.1) family. Trehalose transporter subfamily.

It localises to the cell membrane. Functionally, fails to transport trehalose. This Drosophila simulans (Fruit fly) protein is Facilitated trehalose transporter Tret1-2 homolog.